Here is a 525-residue protein sequence, read N- to C-terminus: Chromosomal replication initiator protein DnaA (525 aa).

The tract at residues Met-1–Thr-71 is domain I, interacts with DnaA modulators. The tract at residues Thr-71–Ser-188 is domain II. A disordered region spans residues Ala-162–Asp-182. Low complexity predominate over residues Pro-169 to Ala-181. Positions Lys-189 to Ser-405 are domain III, AAA+ region. ATP-binding residues include Gly-233, Gly-235, Lys-236, and Thr-237. Residues Lys-406–Gly-525 are domain IV, binds dsDNA.

It belongs to the DnaA family. Oligomerizes as a right-handed, spiral filament on DNA at oriC.

It localises to the cytoplasm. Plays an essential role in the initiation and regulation of chromosomal replication. ATP-DnaA binds to the origin of replication (oriC) to initiate formation of the DNA replication initiation complex once per cell cycle. Binds the DnaA box (a 9 base pair repeat at the origin) and separates the double-stranded (ds)DNA. Forms a right-handed helical filament on oriC DNA; dsDNA binds to the exterior of the filament while single-stranded (ss)DNA is stabiized in the filament's interior. The ATP-DnaA-oriC complex binds and stabilizes one strand of the AT-rich DNA unwinding element (DUE), permitting loading of DNA polymerase. After initiation quickly degrades to an ADP-DnaA complex that is not apt for DNA replication. Binds acidic phospholipids. The chain is Chromosomal replication initiator protein DnaA from Burkholderia cenocepacia (strain HI2424).